The primary structure comprises 260 residues: Ava biosynthesis cluster protein M (260 aa).

The signal sequence occupies residues 1-15 (MKVLVLGLCRTGTSS).

Belongs to the cytochrome P450 family.

It functions in the pathway secondary metabolite biosynthesis. In terms of biological role, part of the cluster that mediates the biosynthesis of a highly modified cyclo-arginine-tryptophan dipeptide (cRW). The first step of the pathway is perfornmed by the arginine-containing cyclodipeptide synthase (RCPDS) avaA that acts as the scaffold-generating enzyme and is responsible for formation of the cyclo-Arg-Trp (cRW) diketopiperazine. AvaB then acts as a multifunctional flavoenzyme that is responsible for generating the cyclo-Arg-formylkynurenine DKP, which can be deformylated by avaC. AvaB then further catalyzes an additional N-oxidation followed by cyclization and dehydration. The next step is an N-acetylation of the guanidine group catalyzed by the arginine N-acetyltransferase avaD. The roles of the additional enzymes identified within the ava cluster still have to be determined. This is Ava biosynthesis cluster protein M from Aspergillus versicolor.